Reading from the N-terminus, the 448-residue chain is Asparagine--tRNA ligase (448 aa).

This sequence belongs to the class-II aminoacyl-tRNA synthetase family. Homodimer.

It is found in the cytoplasm. The enzyme catalyses tRNA(Asn) + L-asparagine + ATP = L-asparaginyl-tRNA(Asn) + AMP + diphosphate + H(+). In Streptococcus thermophilus (strain ATCC BAA-491 / LMD-9), this protein is Asparagine--tRNA ligase.